The primary structure comprises 246 residues: Transcriptional regulatory protein LytR (246 aa).

The 115-residue stretch at 2 to 116 (KALIIDDEPL…RIEQAVNKVR (115 aa)) folds into the Response regulatory domain. Residue D53 is modified to 4-aspartylphosphate. Residues 141–245 (LPVEIDDKIH…MKDFKASIGL (105 aa)) form the HTH LytTR-type domain.

As to quaternary structure, homodimer; when phosphorylated. Phosphorylated and dephosphorylated by LytS.

Its subcellular location is the cytoplasm. Its function is as follows. Member of the two-component regulatory system LytR/LytS that regulates genes involved in autolysis, programmed cell death, biofilm formation and cell wall metabolism. Also participates in sensing and responding to host defense cationic antimicrobial peptides (HDPs). Upon phosphorylation by LytS, functions as a transcription regulator by direct binding to promoter regions of target genes including lrgA and lrgB, to positively regulate their expression. This Staphylococcus aureus (strain USA300) protein is Transcriptional regulatory protein LytR (lytR).